Reading from the N-terminus, the 320-residue chain is Aspartate carbamoyltransferase catalytic subunit (320 aa).

Residues R68 and T69 each contribute to the carbamoyl phosphate site. An L-aspartate-binding site is contributed by K96. R118, H148, and Q151 together coordinate carbamoyl phosphate. R181 and R236 together coordinate L-aspartate. 2 residues coordinate carbamoyl phosphate: G277 and P278.

It belongs to the aspartate/ornithine carbamoyltransferase superfamily. ATCase family. In terms of assembly, heterododecamer (2C3:3R2) of six catalytic PyrB chains organized as two trimers (C3), and six regulatory PyrI chains organized as three dimers (R2).

It catalyses the reaction carbamoyl phosphate + L-aspartate = N-carbamoyl-L-aspartate + phosphate + H(+). It participates in pyrimidine metabolism; UMP biosynthesis via de novo pathway; (S)-dihydroorotate from bicarbonate: step 2/3. In terms of biological role, catalyzes the condensation of carbamoyl phosphate and aspartate to form carbamoyl aspartate and inorganic phosphate, the committed step in the de novo pyrimidine nucleotide biosynthesis pathway. The sequence is that of Aspartate carbamoyltransferase catalytic subunit from Variovorax paradoxus (strain S110).